The sequence spans 668 residues: L-type lectin-domain containing receptor kinase I.7 (668 aa).

A signal peptide spans 1–21 (MIRGLLLGIIWMIFCVCSSFQ). The Extracellular segment spans residues 22–285 (QETPFVYNNF…SSTKKKSTSP (264 aa)). Positions 24–256 (TPFVYNNFGH…YQYILGWSFS (233 aa)) are legume-lectin like. 5 N-linked (GlcNAc...) asparagine glycosylation sites follow: Asn-56, Asn-125, Asn-167, Asn-201, and Asn-223. A helical transmembrane segment spans residues 286-306 (VLSVLLGLIAFIVLGILVVAY). The Cytoplasmic portion of the chain corresponds to 307–668 (LYRRNLYSEV…THSVLYGSGR (362 aa)). In terms of domain architecture, Protein kinase spans 341–620 (FNRSEFLGRG…LNGNLALPEF (280 aa)). ATP-binding positions include 347–355 (LGRGGFGEV) and Lys-372. Asp-468 (proton acceptor) is an active-site residue.

The protein in the C-terminal section; belongs to the protein kinase superfamily. Ser/Thr protein kinase family. It in the N-terminal section; belongs to the leguminous lectin family.

The protein localises to the cell membrane. It carries out the reaction L-seryl-[protein] + ATP = O-phospho-L-seryl-[protein] + ADP + H(+). It catalyses the reaction L-threonyl-[protein] + ATP = O-phospho-L-threonyl-[protein] + ADP + H(+). Functionally, involved in resistance response to the pathogenic oomycetes Phytophthora infestans and Phytophthora capsici. This is L-type lectin-domain containing receptor kinase I.7 from Arabidopsis thaliana (Mouse-ear cress).